Consider the following 317-residue polypeptide: Mitochondrial thiamine pyrophosphate carrier 1 (317 aa).

6 consecutive transmembrane segments (helical) span residues 15–37, 80–100, 118–138, 168–190, 205–227, and 281–300; these read TVSWYNSVIAGSVSGVFARMATA, IPATAMYVVYGAVQFGSYSWF, LTVGALAGMTSSVVSYPLDLL, GFFTGISTAMTTVTLSTAIMFLT, FWSRPVSASSGIIAGFVSKTMVF, and GLTMGLCKSVPTTAISLFVY. Solcar repeat units lie at residues 16-103, 112-197, and 206-306; these read VSWY…FNNV, SQQG…VNIV, and WSRP…TMDL.

It belongs to the mitochondrial carrier (TC 2.A.29) family.

The protein localises to the mitochondrion inner membrane. Its function is as follows. Mitochondrial transporter that mediates uptake of thiamine pyrophosphate (ThPP) into mitochondria. The polypeptide is Mitochondrial thiamine pyrophosphate carrier 1 (TPC1) (Kluyveromyces lactis (strain ATCC 8585 / CBS 2359 / DSM 70799 / NBRC 1267 / NRRL Y-1140 / WM37) (Yeast)).